The chain runs to 64 residues: Disintegrin CV-11-beta (64 aa).

A Disintegrin domain is found at 1–64 (NSAHPCCDPV…SDCPRNPWKD (64 aa)). Disulfide bonds link Cys6-Cys29, Cys20-Cys26, Cys25-Cys50, and Cys38-Cys57. A Cell attachment site motif is present at residues 42–44 (RGD).

Belongs to the disintegrin family. Dimeric disintegrin subfamily. In terms of assembly, heterodimer with subunit alpha; disulfide-linked. In terms of tissue distribution, expressed by the venom gland.

Its subcellular location is the secreted. Inhibits ADP-induced human platelet aggregation. Antagonist of alpha-IIb/beta-3 (ITGA2B/ITGB3). The chain is Disintegrin CV-11-beta from Cerastes vipera (Sahara sand viper).